The sequence spans 154 residues: Protein X (154 aa).

Positions 28 to 48 are disordered; it reads RTLPGSLGAVPPPSSSAVPAD. Residues 30–46 are compositionally biased toward low complexity; it reads LPGSLGAVPPPSSSAVP. Residues 68–117 are mitochondrial targeting sequence; it reads PCALRFTSARRMETTVNAPWSLPTVLHKRTLGLSGRSMTWIEDYIKDCVF.

Belongs to the orthohepadnavirus protein X family. As to quaternary structure, may form homodimer. May interact with host CEBPA, CFLAR, CREB1, DDB1, E4F1, HBXIP, HSPD1/HSP60, NFKBIA, POLR2E and SMAD4. Interacts with host SMC5-SMC6 complex and induces its degradation. Interacts with host TRPC4AP; leading to prevent ubiquitination of TRPC4AP. Interacts with host PLSCR1; this interaction promotes ubiquitination and degradation of HBx and impairs HBx-mediated cell proliferation. Post-translationally, a fraction may be phosphorylated in insect cells and HepG2 cells, a human hepatoblastoma cell line. Phosphorylated in vitro by host protein kinase C or mitogen-activated protein kinase. N-acetylated in insect cells.

Its subcellular location is the host cytoplasm. The protein localises to the host nucleus. It localises to the host mitochondrion. Its function is as follows. Multifunctional protein that plays a role in silencing host antiviral defenses and promoting viral transcription. Does not seem to be essential for HBV infection. May be directly involved in development of cirrhosis and liver cancer (hepatocellular carcinoma). Most of cytosolic activities involve modulation of cytosolic calcium. The effect on apoptosis is controversial depending on the cell types in which the studies have been conducted. May induce apoptosis by localizing in mitochondria and causing loss of mitochondrial membrane potential. May also modulate apoptosis by binding host CFLAR, a key regulator of the death-inducing signaling complex (DISC). Promotes viral transcription by using the host E3 ubiquitin ligase DDB1 to target the SMC5-SMC6 complex to proteasomal degradation. This host complex would otherwise bind to viral episomal DNA, and prevents its transcription. Moderately stimulates transcription of many different viral and cellular transcription elements. Promoters and enhancers stimulated by HBx contain DNA binding sites for NF-kappa-B, AP-1, AP-2, c-EBP, ATF/CREB, or the calcium-activated factor NF-AT. This chain is Protein X, found in Homo sapiens (Human).